A 399-amino-acid chain; its full sequence is Proteinase-activated receptor 2 (399 aa).

The signal sequence occupies residues 1-25; the sequence is MRSLSLAWLLGGITLLAASVSCSRT. Positions 26–38 are cleaved as a propeptide — removed for receptor activation; that stretch reads ENLAPGRNNSKGR. The N-linked (GlcNAc...) asparagine glycan is linked to Asn-33. The Extracellular segment spans residues 39–73; the sequence is SLIGRLETQPPITGKGVPVEPGFSIDEFSASILTG. A helical transmembrane segment spans residues 74–103; that stretch reads KLTTVFLPVVYIIVFVIGLPSNGMALWIFL. Topologically, residues 104 to 110 are cytoplasmic; the sequence is FRTKKKH. The chain crosses the membrane as a helical span at residues 111 to 139; sequence PAVIYMANLALADLLSVIWFPLKISYHLH. Topologically, residues 140 to 151 are extracellular; it reads GNNWVYGEALCK. A disulfide bridge links Cys-150 with Cys-228. A helical transmembrane segment spans residues 152 to 179; the sequence is VLIGFFYGNMYCSILFMTCLSVQRYWVI. Topologically, residues 180–185 are cytoplasmic; the sequence is VNPMGH. A helical transmembrane segment spans residues 186–213; that stretch reads PRKKANIAVGVSLAIWLLIFLVTIPLYV. The Extracellular portion of the chain corresponds to 214 to 237; it reads MKQTIYIPALNITTCHDVLPEEVL. N-linked (GlcNAc...) asparagine glycosylation occurs at Asn-224. The helical transmembrane segment at 238–271 threads the bilayer; sequence VGDMFNYFLSLAIGVFLFPALLTASAYVLMIKTL. At 272-279 the chain is on the cytoplasmic side; that stretch reads RSSAMDEH. A helical transmembrane segment spans residues 280 to 319; the sequence is SEKKRQRAIRLIITVLAMYFICFAPSNLLLVVHYFLIKTQ. The Extracellular segment spans residues 320-325; that stretch reads RQSHVY. A helical membrane pass occupies residues 326–349; that stretch reads ALYLVALCLSTLNSCIDPFVYYFV. Residues 350–399 lie on the Cytoplasmic side of the membrane; that stretch reads SKDFRDHARNALLCRSVRTVNRMQISLSSNKFSRKSGSYSSSSTSVKTSY. Cys-363 carries S-palmitoyl cysteine lipidation.

Belongs to the G-protein coupled receptor 1 family. Interacts with TLR4, COPS5 and TMED2. Interacts with GNAQ, GNA11, GNA12, GNA13 and GNA14. A proteolytic cleavage generates a new N-terminus that functions as a tethered ligand. Activating serine proteases include trypsin, mast cell tryptase, coagulation factors VII and Xa, myeloblastin/PRTN3 and membrane-type serine protease 1/ST14. Proposed subsequent cleavage by serine proteases is leading to receptor deactivation and include neutrophil elastase and cathepsin G. At least in part, implicated proteases are also shown to activate the receptor; the glycosylation status of the receptor is thought to contribute to the difference. In terms of processing, N-glycosylated and sialylated. Post-translationally, multiple phosphorylated on serine and threonine residues in the cytoplasmic region upon receptor activation; required for receptor desensitization and recruitment of beta-arrestin. Monoubiquitinated by Cbl at the plasma membrane and in early endosomes; not required for receptor endocytosis but for translocation to late endosomes or lysosomes. Deubiquitination involves Stambp and Usp8; required for lysosomal trafficking and receptor degradation.

It is found in the cell membrane. Receptor for trypsin and trypsin-like enzymes coupled to G proteins. Its function is mediated through the activation of several signaling pathways including phospholipase C (PLC), intracellular calcium, mitogen-activated protein kinase (MAPK), I-kappaB kinase/NF-kappaB and Rho. Can also be transactivated by cleaved F2r/Par1. Involved in modulation of inflammatory responses and regulation of innate and adaptive immunity, and acts as a sensor for proteolytic enzymes generated during infection. Generally is promoting inflammation. Can signal synergistically with Tlr4 and probably Tlr2 in inflammatory responses and modulates Tlr3 signaling. Has a protective role in establishing the endothelial barrier; the activity involves coagulation factor X. Regulates endothelial cell barrier integrity during neutrophil extravasation, probably following proteolytic cleavage by PRTN3. Proposed to have a bronchoprotective role in airway epithelium, but also shown to compromise the airway epithelial barrier by interrupting E-cadherin adhesion. Involved in the regulation of vascular tone; activation results in hypotension presumably mediated by vasodilation. Associates with a subset of G proteins alpha subunits such as GNAQ, GNA11, GNA14, GNA12 and GNA13, but probably not with G(o)-alpha, G(i) subunit alpha-1 and G(i) subunit alpha-2. Believed to be a class B receptor which internalizes as a complex with arrestin and traffic with it to endosomal vesicles, presumably as desensitized receptor, for extended periods of time. Mediates inhibition of TNF-alpha stimulated JNK phosphorylation via coupling to GNAQ and GNA11; the function involves dissociation of Ripk1 and Tradd from Tnfr1. Mediates phosphorylation of nuclear factor NF-kappa-B RELA subunit at 'Ser-536'; the function involves Ikbkb and is predominantly independent of G proteins. Involved in cellular migration. Involved in cytoskeletal rearrangement and chemotaxis through beta-arrestin-promoted scaffolds; the function is independent of GNAQ and GNA11 and involves promotion of cofilin dephosphorylation and actin filament severing. Induces redistribution of Cops5 from the plasma membrane to the cytosol and activation of the JNK cascade is mediated by Cops5. Involved in the recruitment of leukocytes to the sites of inflammation and is the major PAR receptor capable of modulating eosinophil function such as pro-inflammatory cytokine secretion, superoxide production and degranulation. During inflammation promotes dendritic cell maturation, trafficking to the lymph nodes and subsequent T-cell activation. Involved in antimicrobial response of innate immune cells; activation enhances phagocytosis of Gram-positive and killing of Gram-negative bacteria. Acts synergistically with interferon-gamma in enhancing antiviral responses. Mediates activation of pro-inflammatory and pro-fibrotic responses in fibroblasts, triggered by coagulation factor Xa (F10). Probably mediates activation of barrier protective signaling responses in endothelial cells, triggered by coagulation factor Xa (F10). In Mus musculus (Mouse), this protein is Proteinase-activated receptor 2 (F2rl1).